A 320-amino-acid chain; its full sequence is Annexin A5 (320 aa).

Position 2 is an N-acetylalanine (Ala2). 4 Annexin repeats span residues 15–86 (FDER…ALMK), 87–158 (PSRL…VLLQ), 170–242 (AQVE…AVVK), and 246–317 (SIPA…LLCG). A Glycyl lysine isopeptide (Lys-Gly) (interchain with G-Cter in SUMO1); alternate cross-link involves residue Lys29. Lys29 is covalently cross-linked (Glycyl lysine isopeptide (Lys-Gly) (interchain with G-Cter in SUMO2); alternate). Ser37 carries the post-translational modification Phosphoserine. 5 positions are modified to N6-acetyllysine: Lys70, Lys76, Lys79, Lys97, and Lys101. Lys290 carries the N6-succinyllysine modification. The [IL]-x-C-x-x-[DE] motif motif lies at 314 to 320 (LLCGGED).

It belongs to the annexin family. In terms of assembly, monomer. Binds ATRX and EIF5B. Post-translationally, S-nitrosylation is induced by interferon-gamma and oxidatively-modified low-densitity lipoprotein (LDL(ox)) possibly implicating the iNOS-S100A8/9 transnitrosylase complex.

In terms of biological role, this protein is an anticoagulant protein that acts as an indirect inhibitor of the thromboplastin-specific complex, which is involved in the blood coagulation cascade. The polypeptide is Annexin A5 (ANXA5) (Macaca fascicularis (Crab-eating macaque)).